The sequence spans 236 residues: Potassium/proton antiporter CemA (236 aa).

4 consecutive transmembrane segments (helical) span residues 18–38 (YIISLSFFFILIYQLLNFLVL), 114–134 (IAHVFTDLLIAFLIFCLLINA), 161–181 (LILFTDIFVGFHSSHGWKILI), and 196–216 (FIFLFVATFPVILDTLFKYWI).

The protein belongs to the CemA family.

It is found in the plastid. The protein localises to the chloroplast inner membrane. The enzyme catalyses K(+)(in) + H(+)(out) = K(+)(out) + H(+)(in). In terms of biological role, contributes to K(+)/H(+) antiport activity by supporting proton efflux to control proton extrusion and homeostasis in chloroplasts in a light-dependent manner to modulate photosynthesis. Prevents excessive induction of non-photochemical quenching (NPQ) under continuous-light conditions. Indirectly promotes efficient inorganic carbon uptake into chloroplasts. In Mesostigma viride (Green alga), this protein is Potassium/proton antiporter CemA.